A 446-amino-acid chain; its full sequence is Calcium-binding and coiled-coil domain-containing protein 2 (446 aa).

Residues 133 to 136 (ILVV) carry the CLIR motif. A coiled-coil region spans residues 137 to 349 (TTQGEVEEIE…RENSRLLSYM (213 aa)). Positions 203-206 (DYWE) match the LIR-like motif. Residues 362-390 (TSDEGGARQNPGLAYGNPYSGIQESSSPS) form a disordered region. Positions 371–381 (NPGLAYGNPYS) are interaction with LGALS8. The segment covering 381 to 390 (SGIQESSSPS) has biased composition (polar residues). Positions 395 to 446 (KKCPICKADDICDHTLEQQQMQPLCFNCPICDKIFPATEKQIFEDHVFCHSL) are interaction with MYO6. The UBZ1-type zinc-finger motif lies at 419–444 (CFNCPICDKIFPATEKQIFEDHVFCH). Cys-422, Cys-425, His-440, and His-444 together coordinate Zn(2+). A Phosphoserine modification is found at Ser-445.

It belongs to the CALCOCO family. In terms of assembly, dimer. Part of a complex consisting of CALCOCO2, TAX1BP1 and MYO6. Interacts with MYO6. Interacts with GEMIN4. Interacts with ATG8 family members MAP1LC3A, MAP1LC3B, GABARAP, GABARAPL1 and GABARAPL2. Interacts with ATG8 family member MAP1LC3C. Interacts with LGALS8. Interacts with TOM1; the interaction is indirect and is mediated by MYO6, which acts as a bridge between TOM1 and CALCOCO2. Interacts with AZI2. (Microbial infection) Interacts with Lassa virus protein Z. As to quaternary structure, (Microbial infection) Interacts with Mopeia virus protein Z. (Microbial infection) Cleaved by S.pyogenes SpeB protease; leading to its degradation. Degradation by SpeB prevents autophagy, promoting to S.pyogenes intracellular replication. As to expression, expressed in all tissues tested with highest expression in skeletal muscle and lowest in brain.

It localises to the cytoplasm. It is found in the perinuclear region. The protein resides in the cytoskeleton. The protein localises to the cytoplasmic vesicle. Its subcellular location is the autophagosome membrane. In terms of biological role, xenophagy-specific receptor required for autophagy-mediated intracellular bacteria degradation. Acts as an effector protein of galectin-sensed membrane damage that restricts the proliferation of infecting pathogens such as Salmonella typhimurium upon entry into the cytosol by targeting LGALS8-associated bacteria for autophagy. Initially orchestrates bacteria targeting to autophagosomes and subsequently ensures pathogen degradation by regulating pathogen-containing autophagosome maturation. Bacteria targeting to autophagosomes relies on its interaction with MAP1LC3A, MAP1LC3B and/or GABARAPL2, whereas regulation of pathogen-containing autophagosome maturation requires the interaction with MAP3LC3C. May play a role in ruffle formation and actin cytoskeleton organization and seems to negatively regulate constitutive secretion. In Homo sapiens (Human), this protein is Calcium-binding and coiled-coil domain-containing protein 2 (CALCOCO2).